Consider the following 340-residue polypeptide: Glyceraldehyde-3-phosphate dehydrogenase (340 aa).

NAD(+) is bound by residues 11–12 (SI) and Gly-111. D-glyceraldehyde 3-phosphate is bound at residue 140 to 142 (SCN). Catalysis depends on Cys-141, which acts as the Nucleophile. NAD(+) is bound at residue Arg-169. 195 to 196 (HG) contacts D-glyceraldehyde 3-phosphate. Residue Gln-303 participates in NAD(+) binding.

This sequence belongs to the glyceraldehyde-3-phosphate dehydrogenase family. In terms of assembly, homotetramer.

It is found in the cytoplasm. It carries out the reaction D-glyceraldehyde 3-phosphate + phosphate + NADP(+) = (2R)-3-phospho-glyceroyl phosphate + NADPH + H(+). It catalyses the reaction D-glyceraldehyde 3-phosphate + phosphate + NAD(+) = (2R)-3-phospho-glyceroyl phosphate + NADH + H(+). The protein operates within carbohydrate degradation; glycolysis; pyruvate from D-glyceraldehyde 3-phosphate: step 1/5. In Methanococcus maripaludis (strain DSM 14266 / JCM 13030 / NBRC 101832 / S2 / LL), this protein is Glyceraldehyde-3-phosphate dehydrogenase.